The sequence spans 135 residues: Fluoride-specific ion channel FluC (135 aa).

4 helical membrane passes run 7 to 27 (IAAI…LGLA), 37 to 57 (IGTL…IAYV), 70 to 90 (FMIT…AELF), and 105 to 125 (LGLH…TIGL). Positions 77 and 80 each coordinate Na(+).

It belongs to the fluoride channel Fluc/FEX (TC 1.A.43) family.

It localises to the cell inner membrane. The catalysed reaction is fluoride(in) = fluoride(out). Its activity is regulated as follows. Na(+) is not transported, but it plays an essential structural role and its presence is essential for fluoride channel function. Its function is as follows. Fluoride-specific ion channel. Important for reducing fluoride concentration in the cell, thus reducing its toxicity. The protein is Fluoride-specific ion channel FluC of Xanthomonas oryzae pv. oryzae (strain MAFF 311018).